A 347-amino-acid polypeptide reads, in one-letter code: Fructose-1,6-bisphosphatase class 1 (347 aa).

Mg(2+) contacts are provided by E106, D128, I130, and D131. Substrate contacts are provided by residues 131-134, N223, Y251, and K281; that span reads DGSS. Mg(2+) is bound at residue E287.

It belongs to the FBPase class 1 family. In terms of assembly, homotetramer. Mg(2+) is required as a cofactor.

It localises to the cytoplasm. The enzyme catalyses beta-D-fructose 1,6-bisphosphate + H2O = beta-D-fructose 6-phosphate + phosphate. It functions in the pathway carbohydrate biosynthesis; Calvin cycle. This Synechocystis sp. (strain ATCC 27184 / PCC 6803 / Kazusa) protein is Fructose-1,6-bisphosphatase class 1.